Here is a 207-residue protein sequence, read N- to C-terminus: MGRCDGRCTLVVICCLQLVAALQRQVFDFMGYQWAPILANFLHIMAVILGVFGTVQVRSRYLILYAVWLVVWVGWNSFIICFYLEVGHLSQDRDFLMTFNTSLHRSWWMENGPGCLVTPVPDSPLAPQDHHVITVSGCLLDYQYIEVVSSALQVFLALFGFVYACYVSKYSPDDEDSFDFFDGLGSYNYQPPQKISQLQLRPLYTTG.

A run of 3 helical transmembrane segments spans residues 2 to 22 (GRCD…VAAL), 35 to 55 (APIL…FGTV), and 62 to 82 (LILY…IICF). A glycan (N-linked (GlcNAc...) asparagine) is linked at N100. A helical transmembrane segment spans residues 147–167 (VVSSALQVFLALFGFVYACYV).

This sequence belongs to the NKAIN family. In terms of assembly, interacts with atp1b1 C-terminus.

It localises to the cell membrane. The protein is Sodium/potassium-transporting ATPase subunit beta-1-interacting protein 1 (nkain1) of Danio rerio (Zebrafish).